A 38-amino-acid polypeptide reads, in one-letter code: Phi-Lf prophage-derived putative minor coat protein (38 aa).

In Xanthomonas campestris pv. campestris (strain ATCC 33913 / DSM 3586 / NCPPB 528 / LMG 568 / P 25), this protein is Phi-Lf prophage-derived putative minor coat protein (gIX-1).